The chain runs to 448 residues: Trigger factor (448 aa).

The PPIase FKBP-type domain occupies 172-257 (GDRVTVDFVG…MKKVEWPHLP (86 aa)).

It belongs to the FKBP-type PPIase family. Tig subfamily.

The protein resides in the cytoplasm. It carries out the reaction [protein]-peptidylproline (omega=180) = [protein]-peptidylproline (omega=0). In terms of biological role, involved in protein export. Acts as a chaperone by maintaining the newly synthesized protein in an open conformation. Functions as a peptidyl-prolyl cis-trans isomerase. This is Trigger factor from Burkholderia multivorans (strain ATCC 17616 / 249).